Here is a 443-residue protein sequence, read N- to C-terminus: ATP-dependent protease ATPase subunit HslU (443 aa).

Residues Ile18, 60-65, Asp256, Glu321, and Arg393 contribute to the ATP site; that span reads GVGKTE.

Belongs to the ClpX chaperone family. HslU subfamily. In terms of assembly, a double ring-shaped homohexamer of HslV is capped on each side by a ring-shaped HslU homohexamer. The assembly of the HslU/HslV complex is dependent on binding of ATP.

It is found in the cytoplasm. Its function is as follows. ATPase subunit of a proteasome-like degradation complex; this subunit has chaperone activity. The binding of ATP and its subsequent hydrolysis by HslU are essential for unfolding of protein substrates subsequently hydrolyzed by HslV. HslU recognizes the N-terminal part of its protein substrates and unfolds these before they are guided to HslV for hydrolysis. This is ATP-dependent protease ATPase subunit HslU from Yersinia pestis bv. Antiqua (strain Antiqua).